The primary structure comprises 330 residues: Uroporphyrinogen decarboxylase (330 aa).

Residues 10–14 (RQAGR), phenylalanine 29, serine 59, aspartate 60, tyrosine 137, serine 192, and histidine 307 contribute to the substrate site.

The protein belongs to the uroporphyrinogen decarboxylase family. In terms of assembly, homodimer.

It localises to the plastid. The protein localises to the chloroplast. The enzyme catalyses uroporphyrinogen III + 4 H(+) = coproporphyrinogen III + 4 CO2. It participates in porphyrin-containing compound metabolism; protoporphyrin-IX biosynthesis; coproporphyrinogen-III from 5-aminolevulinate: step 4/4. Catalyzes the decarboxylation of four acetate groups of uroporphyrinogen-III to yield coproporphyrinogen-III. In Hordeum vulgare (Barley), this protein is Uroporphyrinogen decarboxylase (DCUP).